Here is a 252-residue protein sequence, read N- to C-terminus: MESPAGRTPAPGALPYYVAFSQLLGLTVVAVTGAWLGAYRGGIAWESALQFNVHPLCMIIGLVFLQGDALLVYRVFRNEAKRTTKILHGLLHVLAFVIALVGLVAVFDYHRKKGIADLYSLHSWCGILVFVLFLAQWLVGLGFFLFPGASFSLRSRYRPQHVFFGAAIFLLSVGTALLGLKEALLFQLGTKYSAFESEGVLANVLGLLLVAFGAVVLYILTRADWKRPLQAEEQALSMDFKTLTEGDSPSSQ.

At Met-1 the chain carries N-acetylmethionine. The Cytoplasmic segment spans residues 1 to 17; sequence MESPAGRTPAPGALPYY. Residues 18–38 traverse the membrane as a helical segment; that stretch reads VAFSQLLGLTVVAVTGAWLGA. A Cytochrome b561 domain is found at 20–221; sequence FSQLLGLTVV…FGAVVLYILT (202 aa). The Vesicular segment spans residues 39–52; the sequence is YRGGIAWESALQFN. A helical membrane pass occupies residues 53–73; it reads VHPLCMIIGLVFLQGDALLVY. Positions 54, 74, and 81 each coordinate heme b. Residues 74–85 lie on the Cytoplasmic side of the membrane; it reads RVFRNEAKRTTK. Positions 81 and 85 each coordinate L-ascorbate. Residues 86–106 traverse the membrane as a helical segment; that stretch reads ILHGLLHVLAFVIALVGLVAV. Heme b contacts are provided by residues His-88, 117–120, and His-122; that span reads DLYS. Residues 107 to 125 lie on the Vesicular side of the membrane; sequence FDYHRKKGIADLYSLHSWC. Residues 126-146 form a helical membrane-spanning segment; the sequence is GILVFVLFLAQWLVGLGFFLF. Topologically, residues 147 to 159 are cytoplasmic; it reads PGASFSLRSRYRP. Residue Arg-154 coordinates L-ascorbate. Residues 160 to 180 form a helical membrane-spanning segment; that stretch reads QHVFFGAAIFLLSVGTALLGL. Heme b-binding residues include His-161 and Glu-182. At 181 to 199 the chain is on the vesicular side; it reads KEALLFQLGTKYSAFESEG. A helical transmembrane segment spans residues 200–220; it reads VLANVLGLLLVAFGAVVLYIL. Residues 221–252 are Cytoplasmic-facing; that stretch reads TRADWKRPLQAEEQALSMDFKTLTEGDSPSSQ. Heme b is bound at residue Lys-226. Ser-248 and Ser-250 each carry phosphoserine.

The cofactor is heme b.

Its subcellular location is the cytoplasmic vesicle. The protein resides in the secretory vesicle. It localises to the chromaffin granule membrane. It carries out the reaction monodehydro-L-ascorbate radical(out) + L-ascorbate(in) = monodehydro-L-ascorbate radical(in) + L-ascorbate(out). In terms of biological role, transmembrane reductase that uses ascorbate as an electron donor in the cytoplasm and transfers electrons across membranes to reduce monodehydro-L-ascorbate radical in the lumen of secretory vesicles. It is therefore involved the regeneration and homeostasis within secretory vesicles of ascorbate which in turn provides reducing equivalents needed to support the activity of intravesicular enzymes. This Sus scrofa (Pig) protein is Transmembrane ascorbate-dependent reductase CYB561 (CYB561).